Consider the following 329-residue polypeptide: Alpha-tubulin N-acetyltransferase 1 (329 aa).

The N-acetyltransferase domain occupies 5–185 (SQVALLPKLS…NNFVVFHRYF (181 aa)). Residues 119-132 (FFVDTSFQRKGFGK) and 155-164 (SVKFLAFLQK) each bind acetyl-CoA. Disordered regions lie at residues 218–261 (PKYQ…GVGK) and 306–329 (GARRRMSPTRSGVQYNIISGTPEH). A compositionally biased stretch (polar residues) spans 220–229 (YQSTTGPNNN). Pro residues predominate over residues 238 to 249 (TPPPPPLPPPLV). Polar residues predominate over residues 313 to 329 (PTRSGVQYNIISGTPEH).

The protein belongs to the acetyltransferase ATAT1 family.

It catalyses the reaction L-lysyl-[alpha-tubulin] + acetyl-CoA = N(6)-acetyl-L-lysyl-[alpha-tubulin] + CoA + H(+). In terms of biological role, specifically acetylates 'Lys-40' in alpha-tubulin on the lumenal side of microtubules. Promotes microtubule destabilization and accelerates microtubule dynamics; this activity may be independent of acetylation activity. Acetylates alpha-tubulin with a slow enzymatic rate, due to a catalytic site that is not optimized for acetyl transfer. Enters the microtubule through each end and diffuses quickly throughout the lumen of microtubules. Acetylates only long/old microtubules because of its slow acetylation rate since it does not have time to act on dynamically unstable microtubules before the enzyme is released. This is Alpha-tubulin N-acetyltransferase 1 from Trypanosoma cruzi (strain CL Brener).